Here is a 347-residue protein sequence, read N- to C-terminus: G-protein coupled receptor homolog U12 (347 aa).

6 helical membrane passes run 36 to 56, 67 to 87, 103 to 124, 147 to 167, 194 to 214, and 236 to 256; these read GITLTTSIPMIIIVVTTMILY, FYVITLFASDFVLMWCVFFMT, LVYFIYHAVCSYSISMLAIIAT, IGILLLASSMCAIPTALFVKT, IVFSFIWGVLPTMVFSFFYVI, and ILLLSFLLIQIPYIAILICEI. Cysteine 101 and cysteine 176 are oxidised to a cystine. Positions 321–347 are disordered; that stretch reads QKRKDSDASEHDQNSKSKASVEKNQPL. Positions 322 to 341 are enriched in basic and acidic residues; sequence KRKDSDASEHDQNSKSKASV.

It belongs to the G-protein coupled receptor 1 family.

It localises to the membrane. Its function is as follows. Probable G-protein coupled receptor. This chain is G-protein coupled receptor homolog U12 (U12), found in Homo sapiens (Human).